A 411-amino-acid polypeptide reads, in one-letter code: Chorismate synthase (411 aa).

Residues arginine 40 and arginine 46 each coordinate NADP(+). FMN contacts are provided by residues 135–137 (RAS) and 256–257 (QA). Residues 278 to 299 (HDGIARGADGRPRRTSDRAGGI) form a disordered region. Basic and acidic residues predominate over residues 285-294 (ADGRPRRTSD). Residues alanine 301, 316–320 (KPIAT), and arginine 342 each bind FMN.

The protein belongs to the chorismate synthase family. In terms of assembly, homotetramer. FMNH2 serves as cofactor.

The enzyme catalyses 5-O-(1-carboxyvinyl)-3-phosphoshikimate = chorismate + phosphate. The protein operates within metabolic intermediate biosynthesis; chorismate biosynthesis; chorismate from D-erythrose 4-phosphate and phosphoenolpyruvate: step 7/7. Catalyzes the anti-1,4-elimination of the C-3 phosphate and the C-6 proR hydrogen from 5-enolpyruvylshikimate-3-phosphate (EPSP) to yield chorismate, which is the branch point compound that serves as the starting substrate for the three terminal pathways of aromatic amino acid biosynthesis. This reaction introduces a second double bond into the aromatic ring system. The protein is Chorismate synthase of Micrococcus luteus (strain ATCC 4698 / DSM 20030 / JCM 1464 / CCM 169 / CCUG 5858 / IAM 1056 / NBRC 3333 / NCIMB 9278 / NCTC 2665 / VKM Ac-2230) (Micrococcus lysodeikticus).